A 530-amino-acid chain; its full sequence is Cytochrome P450 monooxygenase aneG (530 aa).

An N-linked (GlcNAc...) asparagine glycan is attached at N2. Residues 43–63 (WLSILGFTIGCYYVIYTFYAL) form a helical membrane-spanning segment. An N-linked (GlcNAc...) asparagine glycan is attached at N92. Residue C474 coordinates heme.

It belongs to the cytochrome P450 family. The cofactor is heme.

Its subcellular location is the membrane. The enzyme catalyses asperaculane E + reduced [NADPH--hemoprotein reductase] + O2 = asperaculane G + oxidized [NADPH--hemoprotein reductase] + H2O + H(+). The catalysed reaction is asperaculane G + reduced [NADPH--hemoprotein reductase] + O2 = aculene D + oxidized [NADPH--hemoprotein reductase] + CO2 + 2 H2O. It catalyses the reaction asperaculane E + 2 reduced [NADPH--hemoprotein reductase] + 2 O2 = aculene D + 2 oxidized [NADPH--hemoprotein reductase] + CO2 + 3 H2O + H(+). It functions in the pathway secondary metabolite biosynthesis. In terms of biological role, cytochrome P450 monooxygenase; part of the gene cluster that mediates the biosynthesis of aculenes, a unique type of norsesquiterpenes that contain a nordaucane skeleton linked to an L-proline moiety and are of mixed biosynthetic origin. The pathway begins with the synthesis of dauca-4,7-diene by the terpene cyclase aneC using farnesyl pyrophosphate (FPP) as substrate. The cytochrome P450 monooxygenase aneF then performs the initial oxidation at C-12 of dauca-4,7-diene to yield asperaculane D. Asperaculane D is substrate of the cytochrome P450 monooxygenase aneD for C-10 hydroxylation to yield asperaculane E. The cytochrome P450 monooxygenase aneG then converts asperaculane E into aculene D via C-2 oxidation. The monomodular nonribosomal peptide synthtase aneB adenylates L-proline and the thiohydrolase aneE transfers this activated L-proline derivative to aculenes D and C to produce respectively aculenes B and A. The dioxygenase aneA converts aculene D into aculene C, and aculene B into aculene A by introducing the 5,6-alkene moiety. Asperculanes A, B, C and F, as well as 14-prolyl asperculane C, might be shunt products of the pathway. In Aspergillus aculeatus (strain ATCC 16872 / CBS 172.66 / WB 5094), this protein is Cytochrome P450 monooxygenase aneG.